The following is a 268-amino-acid chain: GTP cyclohydrolase 1 type 2 homolog (268 aa).

5 residues coordinate a divalent metal cation: H66, H67, D105, H227, and E231.

The protein belongs to the GTP cyclohydrolase I type 2/NIF3 family. Homohexamer.

The polypeptide is GTP cyclohydrolase 1 type 2 homolog (Clostridium acetobutylicum (strain ATCC 824 / DSM 792 / JCM 1419 / IAM 19013 / LMG 5710 / NBRC 13948 / NRRL B-527 / VKM B-1787 / 2291 / W)).